We begin with the raw amino-acid sequence, 243 residues long: Terpene cyclase atmB (243 aa).

The next 7 helical transmembrane spans lie at 19–39 (IADV…VGMV), 48–68 (YGMA…YGLI), 78–98 (GVFL…IKFG), 112–132 (LPLI…ALAA), 134–154 (IGPA…LSVG), 169–189 (SYTL…SAWL), and 205–225 (LILW…VCFY).

Belongs to the paxB family.

The protein resides in the membrane. Functionally, terpene cyclase; part of the ATM2 gene cluster that mediates the biosynthesis of aflatrem, a tremorgenic mycotoxin with acute neurotoxic effects. Synthesis of geranylgeranyl diphosphate (GGPP) by AtmG (a GGPP synthase) precedes condensation of GGPP with indole 3-glycerol phosphate, followed by epoxidation and cyclization by AtmM (a FAD-dependent monooxygenase) and AtmC (a prenyltransferase) to produce paspaline. AtmB is also essential for paspaline production, but its exact role has not been identified yet. AtmP, a cytochrome P450 monooxygenase, subsequently converts paspaline to 13-desoxypaxilline via PC-M6 by removal of the C-30 methyl group and oxidation at C-10. AtmQ, a cytochrome P450 monooxygenase, then catalyzes the oxidation of 13-desoxypaxilline, first at C-7 to produce paspalicine and then at C-13 to form paspalinine. Finally, AtmD prenylates paspalinine to form aflatrem. The chain is Terpene cyclase atmB from Aspergillus flavus.